The chain runs to 541 residues: Catalase (541 aa).

The disordered stretch occupies residues 1–20; it reads MPQTKGKPHEEQLEQYKNSQ. Residues His-74 and Asn-147 contribute to the active site. Residue Tyr-357 participates in heme binding.

It belongs to the catalase family. The cofactor is heme.

It is found in the peroxisome matrix. It carries out the reaction 2 H2O2 = O2 + 2 H2O. Catalyzes the degradation of hydrogen peroxide (H(2)O(2)) generated by peroxisomal oxidases to water and oxygen, thereby protecting cells from the toxic effects of hydrogen peroxide. The chain is Catalase (CAT) from Ascaris suum (Pig roundworm).